The primary structure comprises 188 residues: Crossover junction endodeoxyribonuclease RuvC (188 aa).

Catalysis depends on residues Asp7, Glu68, and Asp141. Mg(2+)-binding residues include Asp7, Glu68, and Asp141.

This sequence belongs to the RuvC family. In terms of assembly, homodimer which binds Holliday junction (HJ) DNA. The HJ becomes 2-fold symmetrical on binding to RuvC with unstacked arms; it has a different conformation from HJ DNA in complex with RuvA. In the full resolvosome a probable DNA-RuvA(4)-RuvB(12)-RuvC(2) complex forms which resolves the HJ. Requires Mg(2+) as cofactor.

The protein resides in the cytoplasm. The enzyme catalyses Endonucleolytic cleavage at a junction such as a reciprocal single-stranded crossover between two homologous DNA duplexes (Holliday junction).. Its function is as follows. The RuvA-RuvB-RuvC complex processes Holliday junction (HJ) DNA during genetic recombination and DNA repair. Endonuclease that resolves HJ intermediates. Cleaves cruciform DNA by making single-stranded nicks across the HJ at symmetrical positions within the homologous arms, yielding a 5'-phosphate and a 3'-hydroxyl group; requires a central core of homology in the junction. The consensus cleavage sequence is 5'-(A/T)TT(C/G)-3'. Cleavage occurs on the 3'-side of the TT dinucleotide at the point of strand exchange. HJ branch migration catalyzed by RuvA-RuvB allows RuvC to scan DNA until it finds its consensus sequence, where it cleaves and resolves the cruciform DNA. This Mycobacterium avium (strain 104) protein is Crossover junction endodeoxyribonuclease RuvC.